Reading from the N-terminus, the 321-residue chain is Probable DNA polymerase III subunit delta (321 aa).

The protein belongs to the DNA polymerase HolA subunit family. As to quaternary structure, component of the DNA clamp loading complex consisting of tau(3):delta(1):delta'(1). The DNA polymerase III holoenzyme complex contains at least 10 different subunits organized into 3 functionally essential subassemblies: the Pol III core, the beta sliding clamp processivity factor and the clamp-loading complex. The Pol III core (subunits alpha, epsilon and theta) contains the polymerase and the 3'-5' exonuclease proofreading activities. The polymerase is tethered to the template via the dimeric beta sliding clamp processivity factor. The DNA clamp-loading complex assembles the beta sliding clamp onto the primed template and plays a central role in the organization and communication at the replication fork.

It carries out the reaction DNA(n) + a 2'-deoxyribonucleoside 5'-triphosphate = DNA(n+1) + diphosphate. Its function is as follows. Part of the beta sliding clamp loading complex, which hydrolyzes ATP to load the beta clamp onto primed DNA to form the DNA replication pre-initiation complex. DNA polymerase III is a complex, multichain enzyme responsible for most of the replicative synthesis in bacteria. This DNA polymerase also exhibits 3'-5' exonuclease activity. The delta subunit is the wrench that will open the beta subunit dimer. The DNA clamp loading complex (tau(3),delta,delta') is thought to load beta dimers onto DNA by binding ATP which alters the complex's conformation so it can bind beta sliding clamp dimers and open them at one interface. Primed DNA is recognized, ATP is hydrolyzed releasing the clamp loading complex and closing the beta sliding clamp ring around the primed DNA. This chain is Probable DNA polymerase III subunit delta, found in Rickettsia prowazekii (strain Madrid E).